A 263-amino-acid chain; its full sequence is Acyl-[acyl-carrier-protein]--UDP-N-acetylglucosamine O-acyltransferase (263 aa).

The protein belongs to the transferase hexapeptide repeat family. LpxA subfamily. In terms of assembly, homotrimer.

It localises to the cytoplasm. The catalysed reaction is a (3R)-hydroxyacyl-[ACP] + UDP-N-acetyl-alpha-D-glucosamine = a UDP-3-O-[(3R)-3-hydroxyacyl]-N-acetyl-alpha-D-glucosamine + holo-[ACP]. It functions in the pathway glycolipid biosynthesis; lipid IV(A) biosynthesis; lipid IV(A) from (3R)-3-hydroxytetradecanoyl-[acyl-carrier-protein] and UDP-N-acetyl-alpha-D-glucosamine: step 1/6. In terms of biological role, involved in the biosynthesis of lipid A, a phosphorylated glycolipid that anchors the lipopolysaccharide to the outer membrane of the cell. This Campylobacter lari (strain RM2100 / D67 / ATCC BAA-1060) protein is Acyl-[acyl-carrier-protein]--UDP-N-acetylglucosamine O-acyltransferase.